The sequence spans 299 residues: tRNA-cytidine(32) 2-sulfurtransferase (299 aa).

A PP-loop motif motif is present at residues 56–61 (SGGKDS). Residues Cys-131, Cys-134, and Cys-222 each coordinate [4Fe-4S] cluster.

Belongs to the TtcA family. As to quaternary structure, homodimer. The cofactor is Mg(2+). Requires [4Fe-4S] cluster as cofactor.

The protein resides in the cytoplasm. It carries out the reaction cytidine(32) in tRNA + S-sulfanyl-L-cysteinyl-[cysteine desulfurase] + AH2 + ATP = 2-thiocytidine(32) in tRNA + L-cysteinyl-[cysteine desulfurase] + A + AMP + diphosphate + H(+). It participates in tRNA modification. Functionally, catalyzes the ATP-dependent 2-thiolation of cytidine in position 32 of tRNA, to form 2-thiocytidine (s(2)C32). The sulfur atoms are provided by the cysteine/cysteine desulfurase (IscS) system. In Xylella fastidiosa (strain M12), this protein is tRNA-cytidine(32) 2-sulfurtransferase.